Reading from the N-terminus, the 81-residue chain is Short neurotoxin D (81 aa).

The first 21 residues, 1–21, serve as a signal peptide directing secretion; the sequence is MKTLLLTLVVVTIVCLDLGYT. 4 disulfide bridges follow: Cys24-Cys43, Cys38-Cys60, Cys62-Cys73, and Cys74-Cys79.

The protein belongs to the three-finger toxin family. Short-chain subfamily. Type I alpha-neurotoxin sub-subfamily. In terms of tissue distribution, expressed by the venom gland.

Its subcellular location is the secreted. Functionally, binds to muscle nicotinic acetylcholine receptor (nAChR) and inhibit acetylcholine from binding to the receptor, thereby impairing neuromuscular transmission. This chain is Short neurotoxin D, found in Aipysurus laevis (Olive sea snake).